Reading from the N-terminus, the 455-residue chain is MSASTVSITASPRTIRRTPVLSGEKKSNFDFPPSESHANAAIGESSAGTNKDLIRAEAAGERSNTYDVGPVTRKSGSTATGTNTTTTQRRTRKSQGNKIDRGKWKTVVRVFAKQFGALLLLVGLIQLIRKLTLKDSSLSSSNFPIETEMVLSELESRISAVDGLVKTTTKMMQVQVEFLDKKMDSESRALRQTIDSTSSVLHSELKKVESKTERLQVSVDELNAKPLVSREELERVYEELKKGKVGDSDVNIDKLRAYARDIVEKEIGKHVADGLGRVDYALASGGAFVMGHSDPFLVGNGRNWFGTSRRRVHSKAVKMLTPSFGEPGQCFPLKGSNGYVLVRLRAPIIPEAVTLEHVSKAVAYDRSSAPKDCRVSGWLGDIDMETETMPLLTEFSYDLDRSNAQTFDIADSAHSGLVNTVRLDFNSNHGSSSHTCIYRFRVHGRELDSVSVAHA.

Positions 1–12 (MSASTVSITASP) are enriched in polar residues. Residues 1–99 (MSASTVSITA…RTRKSQGNKI (99 aa)) are disordered. N-acetylserine is present on serine 2. The Nuclear segment spans residues 2–105 (SASTVSITAS…GNKIDRGKWK (104 aa)). Phosphoserine is present on serine 63. Residues 74–88 (KSGSTATGTNTTTTQ) are compositionally biased toward low complexity. The short motif at 88 to 95 (QRRTRKSQ) is the Nuclear localization signal element. The chain crosses the membrane as a helical span at residues 106 to 128 (TVVRVFAKQFGALLLLVGLIQLI). The Perinuclear space portion of the chain corresponds to 129 to 455 (RKLTLKDSSL…ELDSVSVAHA (327 aa)). The stretch at 201–225 (LHSELKKVESKTERLQVSVDELNAK) forms a coiled coil. One can recognise an SUN domain in the interval 285–447 (GGAFVMGHSD…YRFRVHGREL (163 aa)).

As to quaternary structure, forms homomers (e.g. dimers, trimers and tetramers) and heteromers with SUN1. Interacts with SUN3, SUN4 and TIK. Core component of the LINC complex which is composed of inner nuclear membrane SUN domain-containing proteins coupled to outer nuclear membrane WIP and WIT proteins. The LINC complex also involves nucleoskeletal proteins CRWN/LINC and possibly KAKU4 and the cytoskeletal myosin KAKU1. Interacts with LINC1, WIP1, WIP2 and WIP3 at the nuclear envelope (NE). Interacts with SINE1, SINE2, SINE3 and SINE4. Interacts with NEAP1, NEA2 and NEAP3. As to expression, expressed in roots, hypocotyls, cotyledons and leaves and inflorescences.

The protein resides in the nucleus inner membrane. It localises to the cytoplasm. It is found in the cytoskeleton. Its subcellular location is the phragmoplast. The protein localises to the endoplasmic reticulum membrane. The protein resides in the nucleus envelope. In terms of biological role, component of SUN-protein-containing multivariate complexes also called LINC complexes which link the nucleoskeleton and cytoskeleton by providing versatile outer nuclear membrane attachment sites for cytoskeletal filaments. Required for the maintenance and/or formation of polarized nuclear shape in root hairs. Modulates the anchoring and mobility of WIP proteins in the nuclear envelope (NE). In association with SUN1, may be involved in telomere attachment to nuclear envelope in the prophase of meiosis. As component of the SUN-WIP-WIT2-KAKU1 complex, mediates the transfer of cytoplasmic forces to the nuclear envelope (NE), leading to nuclear shape changes. The polypeptide is SUN domain-containing protein 2 (Arabidopsis thaliana (Mouse-ear cress)).